A 173-amino-acid chain; its full sequence is Putative MgpC-like protein MPN_092 (173 aa).

Belongs to the MgpC family.

In Mycoplasma pneumoniae (strain ATCC 29342 / M129 / Subtype 1) (Mycoplasmoides pneumoniae), this protein is Putative MgpC-like protein MPN_092.